The chain runs to 554 residues: Polyamine aminopropyltransferase 2 (554 aa).

Pro residues predominate over residues 1–13; that stretch reads MIEPHAPAPPGSP. The tract at residues 1-20 is disordered; that stretch reads MIEPHAPAPPGSPPSWGGPC. 6 helical membrane-spanning segments follow: residues 37 to 57, 69 to 89, 106 to 126, 139 to 159, 184 to 204, and 206 to 226; these read FLVL…ELEL, VTQA…GSLA, AALA…FAWT, ILLV…VPLL, VGAL…LGQL, and GALL…LGLF. The spermidine synthase stretch occupies residues 235-516; the sequence is RWLLLTANAV…RTAPAPRLDP (282 aa). The PABS domain maps to 247–492; the sequence is ALLATATVLA…SVPGPRRAAA (246 aa). S-methyl-5'-thioadenosine is bound at residue Q281. Spermidine-binding residues include H313 and D335. S-methyl-5'-thioadenosine contacts are provided by residues E355 and 389 to 390; that span reads DA. The active-site Proton acceptor is D408. The segment at 476-495 is disordered; that stretch reads DTGPGPGSVPGPRRAAAGPP. The segment covering 485-495 has biased composition (low complexity); sequence PGPRRAAAGPP.

The protein belongs to the spermidine/spermine synthase family. As to quaternary structure, homodimer or homotetramer.

Its subcellular location is the cell membrane. It carries out the reaction S-adenosyl 3-(methylsulfanyl)propylamine + putrescine = S-methyl-5'-thioadenosine + spermidine + H(+). It participates in amine and polyamine biosynthesis; spermidine biosynthesis; spermidine from putrescine: step 1/1. In terms of biological role, catalyzes the irreversible transfer of a propylamine group from the amino donor S-adenosylmethioninamine (decarboxy-AdoMet) to putrescine (1,4-diaminobutane) to yield spermidine. This is Polyamine aminopropyltransferase 2 from Streptomyces coelicolor (strain ATCC BAA-471 / A3(2) / M145).